A 55-amino-acid polypeptide reads, in one-letter code: Large ribosomal subunit protein bL33 (55 aa).

It belongs to the bacterial ribosomal protein bL33 family.

In Roseobacter denitrificans (strain ATCC 33942 / OCh 114) (Erythrobacter sp. (strain OCh 114)), this protein is Large ribosomal subunit protein bL33.